The primary structure comprises 89 residues: Small ribosomal subunit protein uS14 (89 aa).

The protein belongs to the universal ribosomal protein uS14 family. As to quaternary structure, part of the 30S ribosomal subunit. Contacts proteins S3 and S10.

Its function is as follows. Binds 16S rRNA, required for the assembly of 30S particles and may also be responsible for determining the conformation of the 16S rRNA at the A site. This chain is Small ribosomal subunit protein uS14, found in Onion yellows phytoplasma (strain OY-M).